The sequence spans 160 residues: Major pollen allergen Car b 1 isoforms 1A and 1B (160 aa).

This sequence belongs to the BetVI family.

This chain is Major pollen allergen Car b 1 isoforms 1A and 1B, found in Carpinus betulus (European hornbeam).